The following is a 754-amino-acid chain: Polyadenylate-binding protein, cytoplasmic and nuclear (754 aa).

Positions 1-25 (MSAEVSTTPAADNVNGTPEATNAAA) are enriched in polar residues. Residues 1–52 (MSAEVSTTPAADNVNGTPEATNAAATSAPEVTAVESSSPTSPNNNNQPHSAS) form a disordered region. Residues 36–46 (SSSPTSPNNNN) are compositionally biased toward low complexity. 4 consecutive RRM domains span residues 51–129 (ASLY…WSQR), 139–216 (GNVF…HHIS), 232–309 (TNIY…RAQK), and 335–465 (VNLY…LAQR). Disordered stretches follow at residues 365-420 (KVMR…KKSD) and 595-648 (RGGG…EEAP). Positions 366–420 (VMRDSTPAERTETPDSEKEKEVNKENEKKEDEEKAAEEKPKESDEEKKDETKKSD) are enriched in basic and acidic residues. Residues 610–633 (GMRGPGYQGRGGPQGGPRPQGGRG) are compositionally biased toward gly residues. The span at 634-648 (QNAAAQPAAGREEAP) shows a compositional bias: low complexity. Residues 649–726 (AGALTAQALN…ALSVYDEYMK (78 aa)) enclose the PABC domain. The tract at residues 729-754 (GEGEAPADADKPKEAAKETATEENKS) is disordered.

The protein belongs to the polyadenylate-binding protein type-1 family.

It localises to the cytoplasm. It is found in the nucleus. Binds the poly(A) tail of mRNA. Appears to be an important mediator of the multiple roles of the poly(A) tail in mRNA biogenesis, stability and translation. In the nucleus, involved in both mRNA cleavage and polyadenylation. Is also required for efficient mRNA export to the cytoplasm. Acts in concert with a poly(A)-specific nuclease (PAN) to affect poly(A) tail shortening, which may occur concomitantly with either nucleocytoplasmic mRNA transport or translational initiation. In the cytoplasm, stimulates translation initiation and regulates mRNA decay through translation termination-coupled poly(A) shortening, probably mediated by PAN. This is Polyadenylate-binding protein, cytoplasmic and nuclear (pab1) from Aspergillus clavatus (strain ATCC 1007 / CBS 513.65 / DSM 816 / NCTC 3887 / NRRL 1 / QM 1276 / 107).